A 457-amino-acid polypeptide reads, in one-letter code: Methylenetetrahydrofolate--tRNA-(uracil-5-)-methyltransferase TrmFO (457 aa).

12–17 (GGGLAG) contributes to the FAD binding site.

This sequence belongs to the MnmG family. TrmFO subfamily. The cofactor is FAD.

It localises to the cytoplasm. The catalysed reaction is uridine(54) in tRNA + (6R)-5,10-methylene-5,6,7,8-tetrahydrofolate + NADH + H(+) = 5-methyluridine(54) in tRNA + (6S)-5,6,7,8-tetrahydrofolate + NAD(+). It carries out the reaction uridine(54) in tRNA + (6R)-5,10-methylene-5,6,7,8-tetrahydrofolate + NADPH + H(+) = 5-methyluridine(54) in tRNA + (6S)-5,6,7,8-tetrahydrofolate + NADP(+). Catalyzes the folate-dependent formation of 5-methyl-uridine at position 54 (M-5-U54) in all tRNAs. The polypeptide is Methylenetetrahydrofolate--tRNA-(uracil-5-)-methyltransferase TrmFO (Myxococcus xanthus (strain DK1622)).